The following is a 60-amino-acid chain: Large ribosomal subunit protein uL30 (60 aa).

This sequence belongs to the universal ribosomal protein uL30 family. As to quaternary structure, part of the 50S ribosomal subunit.

This chain is Large ribosomal subunit protein uL30, found in Streptococcus pneumoniae (strain Hungary19A-6).